A 970-amino-acid chain; its full sequence is Sodium/calcium exchanger 1 (970 aa).

A signal peptide spans 1–32; it reads MLRLSLSPTYSLGFHLLAMMTLLISHVDHITA. At 33–71 the chain is on the extracellular side; sequence ETEMVEEGNETGECTGSYYCKKGVILPIWEPQDPSFGDK. An N-linked (GlcNAc...) asparagine glycan is attached at Asn-41. The helical transmembrane segment at 72-92 threads the bilayer; the sequence is IARATVYFVAMVYMFLGVSII. Topologically, residues 93 to 133 are cytoplasmic; it reads ADRFMSSIEVITSQEKEITIKKPNGETTKTTVRIWNETVSN. A helical membrane pass occupies residues 134–154; that stretch reads LTLMALGSSAPEILLSVIEVC. Residues 138–178 form an Alpha-1 repeat; that stretch reads ALGSSAPEILLSVIEVCGHNFTAGDLGPSTIVGSAAFNMFI. The Extracellular portion of the chain corresponds to 155–167; the sequence is GHNFTAGDLGPST. Asn-157 is a glycosylation site (N-linked (GlcNAc...) asparagine). The helical transmembrane segment at 168–188 threads the bilayer; that stretch reads IVGSAAFNMFIIIALCVYVVP. Over 189–201 the chain is Cytoplasmic; that stretch reads DGETRKIKHLRVF. The chain crosses the membrane as a helical span at residues 202–222; it reads FVTAAWSIFAYTWLYIILSVI. Residues 223–228 are Extracellular-facing; sequence SPGVVE. The helical transmembrane segment at 229 to 249 threads the bilayer; it reads VWEGLLTFFFFPICVVFAWVA. The Cytoplasmic portion of the chain corresponds to 250–797; sequence DRRLLFYKYV…FVPPTEYWNG (548 aa). The segment at 251–270 is putative calmodulin-binding region; that stretch reads RRLLFYKYVYKRYRAGKQRG. 2 positions are modified to phosphoserine: Ser-282 and Ser-389. Calx-beta domains lie at 393-493 and 524-624; these read VNTE…VHLS and ATVT…LEIG. Residues Glu-417, Asp-453, Asp-478, Asp-479, Ile-481, Glu-483, Glu-486, Asp-530, Asp-531, Asp-532, Glu-548, Asp-584, Asp-610, Glu-611, Glu-612, and Glu-715 each coordinate Ca(2+). A helical transmembrane segment spans residues 798 to 818; sequence WACFIVSILMIGLLTAFIGDL. The Extracellular segment spans residues 819-821; sequence ASH. Residues 822 to 842 traverse the membrane as a helical segment; it reads FGCTIGLKDSVTAVVFVALGT. The Alpha-2 repeat unit spans residues 839–875; the sequence is ALGTSVPDTFASKVAATQDQYADASIGNVTGSNAVNV. Topologically, residues 843–871 are cytoplasmic; sequence SVPDTFASKVAATQDQYADASIGNVTGSN. The helical transmembrane segment at 872–892 threads the bilayer; the sequence is AVNVFLGIGVAWSIAAIYHAA. Residues 893-903 lie on the Extracellular side of the membrane; sequence NGEQFKVSPGT. The helical transmembrane segment at 904–924 threads the bilayer; it reads LAFSVTLFTIFAFINVGVLLY. At 925–941 the chain is on the cytoplasmic side; that stretch reads RRRPEIGGELGGPRTAK. The helical transmembrane segment at 942–962 threads the bilayer; it reads LLTSCLFVLLWLLYIFFSSLE. Residues 963 to 970 are Extracellular-facing; it reads AYCHIKGF.

It belongs to the Ca(2+):cation antiporter (CaCA) (TC 2.A.19) family. SLC8 subfamily.

Its subcellular location is the cell membrane. The catalysed reaction is Ca(2+)(in) + 3 Na(+)(out) = Ca(2+)(out) + 3 Na(+)(in). Its activity is regulated as follows. Activated by micromolar levels of Ca(2+). In terms of biological role, mediates the exchange of one Ca(2+) ion against three to four Na(+) ions across the cell membrane, and thereby contributes to the regulation of cytoplasmic Ca(2+) levels and Ca(2+)-dependent cellular processes. Contributes to Ca(2+) transport during excitation-contraction coupling in muscle. In a first phase, voltage-gated channels mediate the rapid increase of cytoplasmic Ca(2+) levels due to release of Ca(2+) stores from the endoplasmic reticulum. SLC8A1 mediates the export of Ca(2+) from the cell during the next phase, so that cytoplasmic Ca(2+) levels rapidly return to baseline. Required for normal embryonic heart development and the onset of heart contractions. The polypeptide is Sodium/calcium exchanger 1 (SLC8A1) (Cavia porcellus (Guinea pig)).